An 876-amino-acid chain; its full sequence is Leucine--tRNA ligase (876 aa).

Residues 43–53 (PYPSGRIHMGH) carry the 'HIGH' region motif. The short motif at 632-636 (KMSKS) is the 'KMSKS' region element. Position 635 (Lys-635) interacts with ATP.

Belongs to the class-I aminoacyl-tRNA synthetase family.

The protein resides in the cytoplasm. The enzyme catalyses tRNA(Leu) + L-leucine + ATP = L-leucyl-tRNA(Leu) + AMP + diphosphate. This is Leucine--tRNA ligase from Rhizobium etli (strain ATCC 51251 / DSM 11541 / JCM 21823 / NBRC 15573 / CFN 42).